The following is an 834-amino-acid chain: Sodium/hydrogen exchanger 3 (834 aa).

The first 25 residues, 1-25 (MWGLGARGPDRGLLLALALGGLARA), serve as a signal peptide directing secretion. Over 26–51 (GGVEVEPGGAHGESGGFQVVTFEWAH) the chain is Extracellular. The chain crosses the membrane as a helical span at residues 52-74 (VQDPYVIALWILVASLAKIGFHL). Residues 75 to 82 (SHKVTSVV) lie on the Cytoplasmic side of the membrane. Residues 83 to 102 (PESALLIVLGLVLGGIVWAA) traverse the membrane as a helical segment. Over 103–111 (DHIASFTLT) the chain is Extracellular. Residues 112 to 129 (PTVFFFYLLPPIVLDAGY) form a helical membrane-spanning segment. The Cytoplasmic segment spans residues 130 to 132 (FMP). A helical membrane pass occupies residues 133–168 (NRLFFGNLGTILLYAVVGTVWNAATTGLSLYGVFLS). Residues G138, G141, and T142 each coordinate a 1,2-diacyl-sn-glycero-3-phospho-(1D-myo-inositol). The Extracellular segment spans residues 169-181 (GLMGDLQIGLLDF). The chain crosses the membrane as a helical span at residues 182–203 (LLFGSLMAAVDPVAVLAVFEEV). The Cytoplasmic segment spans residues 204 to 205 (HV). A helical membrane pass occupies residues 206-237 (NEVLFIIVFGESLLNDAVTVVLYNVFESFVAL). The Extracellular portion of the chain corresponds to 238–244 (GGDNVTG). A glycan (N-linked (GlcNAc...) asparagine) is linked at N241. A helical transmembrane segment spans residues 245-279 (VDCVKGIVSFFVVSLGGTLVGVVFAFLLSLVTRFT). The Cytoplasmic segment spans residues 280 to 281 (KH). A helical transmembrane segment spans residues 282–304 (VRIIEPGFVFIISYLSYLTSEML). Residues 305–306 (SL) lie on the Extracellular side of the membrane. Residues 307–323 (SAILAITFCGICCQKYV) form a helical membrane-spanning segment. The Cytoplasmic segment spans residues 324-330 (KANISEQ). Residues 331-359 (SATTVRYTMKMLASSAETIIFMFLGISAV) traverse the membrane as a helical segment. Over 360–367 (NPFIWTWN) the chain is Extracellular. Residues 368–389 (TAFVLLTLVFISVYRAIGVVLQ) traverse the membrane as a helical segment. At 390–402 (TWLLNRYRMVQLE) the chain is on the cytoplasmic side. M398 is an a 1,2-diacyl-sn-glycero-3-phospho-(1D-myo-inositol) binding site. A helical membrane pass occupies residues 403–426 (PIDQVVLSYGGLRGAVAFALVVLL). Over 427–433 (DGDKVKE) the chain is Extracellular. The helical transmembrane segment at 434 to 467 (KNLFVSTTIIVVFFTVIFQGLTIKPLVQWLKVKR) threads the bilayer. The Cytoplasmic segment spans residues 468 to 834 (SEHREPRLNE…PAALPESTHM (367 aa)). A 1,2-diacyl-sn-glycero-3-phospho-(1D-myo-inositol) contacts are provided by Q497, I498, and H500. 2 positions are modified to phosphoserine: S555 and S563. Residues 575-589 (RSSTVEASVSYLLRE) are interaction with EZR. Positions 590 to 667 (NVSAVCLDMQ…RKRLESFKST (78 aa)) are interaction with NHERF4. The segment at 591 to 695 (VSAVCLDMQS…AQKRRNSSIP (105 aa)) is interaction with AHCYL1. S592 and S607 each carry phosphoserine. A Phosphoserine; by SGK1 modification is found at S663. Over residues 679–691 (KLYKRERAQKRRN) the composition is skewed to basic residues. Residues 679-728 (KLYKRERAQKRRNSSIPNGKLPMESPAQNFTIKEKDLELSDTEEPPNYDE) form a disordered region. Positions 717-728 (LSDTEEPPNYDE) are enriched in acidic residues. S718, S810, and S813 each carry phosphoserine. Residues 814 to 834 (FLQADGPEERPPAALPESTHM) are disordered.

This sequence belongs to the monovalent cation:proton antiporter 1 (CPA1) transporter (TC 2.A.36) family. Homodimer. Found in the forms of complex and dynamic macromolecular complexes. Binds NHERF1 and NHERF2. Interacts with CHP1; increases SLC9A3 trafficking and activity at the plasma membrane. Interacts with CHP2 and SHANK2. Interacts with PDZK1 (via C-terminal PDZ domain). Interacts with NHERF4 and interaction decrease in response to elevated calcium ion levels. Interacts with AHCYL1; the interaction is required for SLC9A3 activity. Interacts with SNX27 (via PDZ domains); directs SLC9A3 membrane insertion from early endosomes to the plasma membrane. Interacts with EZR; interaction targets SLC9A3 to the apical membrane. In terms of processing, phosphorylated by PKA, which inhibits activity. Phosphorylation at Ser-663 by SGK1 is associated with increased abundance at the cell membrane. Phosphorylation at Ser-718 by CSNK2A1 regulates SLC9A3 activity through the formation of multiple signaling complexes.

It localises to the apical cell membrane. It is found in the cell membrane. The protein resides in the recycling endosome membrane. Its subcellular location is the early endosome membrane. It catalyses the reaction Na(+)(in) + H(+)(out) = Na(+)(out) + H(+)(in). Seems to switch between active and inactive modes in response to various stimuli. Activated directly or indirectly by membrane phosphatidylinositol (PIs). Regulated by a variety of auxiliary proteins, which facilitate the maturation, cell surface expression and function of the transporter. Inhibited specifically by the drug tenapanor. Its function is as follows. Plasma membrane Na(+)/H(+) antiporter. Exchanges intracellular H(+) ions for extracellular Na(+) in 1:1 stoichiometry, playing a key role in salt and fluid absorption and pH homeostasis. Major apical Na(+)/H(+) exchanger in kidney and intestine playing an important role in renal and intestine Na(+) absorption and blood pressure regulation. In Homo sapiens (Human), this protein is Sodium/hydrogen exchanger 3.